We begin with the raw amino-acid sequence, 439 residues long: Protein ABHD8 (439 aa).

2 disordered regions span residues 49–70 (AGPA…AAQG) and 124–156 (PAGS…RPKR). The segment covering 136–145 (AGSGSGSGSG) has biased composition (gly residues). Basic residues predominate over residues 146–156 (GRRRRARRPKR). The region spanning 177-279 (VLFFIHGVGG…HKVIMINGGG (103 aa)) is the AB hydrolase-1 domain. Active-site charge relay system residues include S252, D370, and H398.

The protein belongs to the AB hydrolase superfamily. Interacts with NLRP3 (via NACHT and LLR domains); this interaction is enhanced in the presence of NLRP3 inflammasome inducers, such as ATP, nigericin, silica, or alum. Interacts with ZDHHC12. In terms of assembly, (Microbial infection) Interacts with SARS-CoV-2 nucleoprotein N; this interaction disrupts the NLRP3-ABHD8 association, enhancing NLRP3 stability, ultimately leading to increased inflammasome activation.

The protein localises to the cytoplasm. Negatively regulates NLRP3-driven inflammation. Promotes NLRP3 degradation through the chaperone-mediated autophagy (CMA) pathway, hence attenuating inflammasome activation and IL1B secretion. Acts by recruiting palmitoyltransferase ZDHHC12 to NLRP3, facilitating NLRP3 palmitoylation and subsequent degradation. The sequence is that of Protein ABHD8 from Homo sapiens (Human).